A 384-amino-acid polypeptide reads, in one-letter code: DNA dC-&gt;dU-editing enzyme APOBEC-3G (384 aa).

The essential for cytoplasmic localization stretch occupies residues 1–60 (MTPQFRNTVERMYRDTFSYNFNNRPILSRRNTVWLCYEVKTKDPSRPPLDAKIFRGQVYS). CMP/dCMP-type deaminase domains are found at residues 29–138 (RRNT…LRSL) and 214–328 (GRHE…LRTL). T32 is modified (phosphothreonine; by PKA). Positions 65, 97, and 100 each coordinate Zn(2+). Residues 209–336 (EHWVRGRHET…TLAEAGAKIS (128 aa)) form a necessary for homooligomerization region. The interval 213–215 (RGR) is interaction with DNA. The residue at position 218 (T218) is a Phosphothreonine; by PKA and CAMK2. A Zn(2+)-binding site is contributed by H257. The active-site Proton donor is E259. Zn(2+) contacts are provided by C288 and C291. The tract at residues 313–320 (RIYDDQGR) is interaction with DNA.

It belongs to the cytidine and deoxycytidylate deaminase family. As to quaternary structure, homodimer. Homooligomer. Can bind RNA to form ribonucleoprotein complexes of high-molecular-mass (HMM) or low-molecular-mass (LMM). HMM is inactive and heterogeneous in protein composition because of binding nonselectively to cellular RNAs, which in turn are associated with variety of cellular proteins. The LMM form which is enzymatically active has few or no RNAs associated. Its ability to form homooligomer is distinct from its ability to assemble into HMM. Interacts with APOBEC3B, APOBEC3F, MOV10, AGO2, EIF4E, EIF4ENIF1, DCP2 and DDX6 in an RNA-dependent manner. Interacts with AGO1, AGO3 and PKA/PRKACA. Zn(2+) serves as cofactor.

Its subcellular location is the cytoplasm. The protein resides in the nucleus. The protein localises to the P-body. It catalyses the reaction a 2'-deoxycytidine in single-stranded DNA + H2O + H(+) = a 2'-deoxyuridine in single-stranded DNA + NH4(+). In terms of biological role, DNA deaminase (cytidine deaminase) which acts as an inhibitor of retrovirus replication and retrotransposon mobility. After the penetration of retroviral nucleocapsids into target cells of infection and the initiation of reverse transcription, it can induce the conversion of cytosine to uracil in the minus-sense single-strand viral DNA, leading to G-to-A hypermutations in the subsequent plus-strand viral DNA. The resultant detrimental levels of mutations in the proviral genome, along with a deamination-independent mechanism that works prior to the proviral integration, together exert efficient antiretroviral effects in infected target cells. Selectively targets single-stranded DNA and does not deaminate double-stranded DNA or single- or double-stranded RNA. In Gorilla gorilla gorilla (Western lowland gorilla), this protein is DNA dC-&gt;dU-editing enzyme APOBEC-3G (APOBEC3G).